Consider the following 183-residue polypeptide: Secreted RxLR effector protein 41 (183 aa).

Residues 1-18 (MLGFVTGVLAISAHVIVS) form the signal peptide. The short motif at 41–65 (RRLRSYETDTASARAEEGTSDIEER) is the RxLR-dEER element. N-linked (GlcNAc...) asparagine glycosylation occurs at asparagine 88.

Belongs to the RxLR effector family.

The protein resides in the secreted. It localises to the host nucleus. Its subcellular location is the host cytoplasm. Secreted effector that dos not suppress the host cell death induced by cell death-inducing proteins. The chain is Secreted RxLR effector protein 41 from Plasmopara viticola (Downy mildew of grapevine).